The following is a 510-amino-acid chain: Probable cytochrome P450 4aa1 (510 aa).

Cysteine 450 lines the heme pocket.

This sequence belongs to the cytochrome P450 family. Heme serves as cofactor.

It is found in the endoplasmic reticulum membrane. It localises to the microsome membrane. May be involved in the metabolism of insect hormones and in the breakdown of synthetic insecticides. The polypeptide is Probable cytochrome P450 4aa1 (Cyp4aa1) (Drosophila melanogaster (Fruit fly)).